The primary structure comprises 82 residues: Cytochrome b559 subunit alpha (82 aa).

The helical transmembrane segment at 21 to 35 (VIHSITVPALFIAGW) threads the bilayer. Residue His23 coordinates heme.

The protein belongs to the PsbE/PsbF family. In terms of assembly, heterodimer of an alpha subunit and a beta subunit. PSII is composed of 1 copy each of membrane proteins PsbA, PsbB, PsbC, PsbD, PsbE, PsbF, PsbH, PsbI, PsbJ, PsbK, PsbL, PsbM, PsbT, PsbX, PsbY, PsbZ, Psb30/Ycf12, at least 3 peripheral proteins of the oxygen-evolving complex and a large number of cofactors. It forms dimeric complexes. It depends on heme b as a cofactor.

The protein localises to the plastid. The protein resides in the chloroplast thylakoid membrane. Its function is as follows. This b-type cytochrome is tightly associated with the reaction center of photosystem II (PSII). PSII is a light-driven water:plastoquinone oxidoreductase that uses light energy to abstract electrons from H(2)O, generating O(2) and a proton gradient subsequently used for ATP formation. It consists of a core antenna complex that captures photons, and an electron transfer chain that converts photonic excitation into a charge separation. In Chlamydomonas reinhardtii (Chlamydomonas smithii), this protein is Cytochrome b559 subunit alpha.